Consider the following 431-residue polypeptide: Adenylosuccinate synthetase (431 aa).

GTP-binding positions include Gly12 to Lys18 and Gly40 to Thr42. Asp13 (proton acceptor) is an active-site residue. 2 residues coordinate Mg(2+): Asp13 and Gly40. IMP contacts are provided by residues Asp13–Lys16, Asn38–His41, Thr129, Arg143, Gln224, Thr239, and Arg303. The Proton donor role is filled by His41. Residue Thr299–Arg305 coordinates substrate. GTP is bound by residues Arg305, Lys331 to Asp333, and Ser413 to Gly415.

Belongs to the adenylosuccinate synthetase family. As to quaternary structure, homodimer. Mg(2+) serves as cofactor.

It is found in the cytoplasm. It catalyses the reaction IMP + L-aspartate + GTP = N(6)-(1,2-dicarboxyethyl)-AMP + GDP + phosphate + 2 H(+). It participates in purine metabolism; AMP biosynthesis via de novo pathway; AMP from IMP: step 1/2. Its function is as follows. Plays an important role in the de novo pathway of purine nucleotide biosynthesis. Catalyzes the first committed step in the biosynthesis of AMP from IMP. The polypeptide is Adenylosuccinate synthetase (Ehrlichia canis (strain Jake)).